The following is a 502-amino-acid chain: Probable cytosol aminopeptidase (502 aa).

Lysine 267 and aspartate 272 together coordinate Mn(2+). Lysine 279 is a catalytic residue. Residues aspartate 290, aspartate 349, and glutamate 351 each coordinate Mn(2+). Arginine 353 is a catalytic residue.

Belongs to the peptidase M17 family. The cofactor is Mn(2+).

It localises to the cytoplasm. It carries out the reaction Release of an N-terminal amino acid, Xaa-|-Yaa-, in which Xaa is preferably Leu, but may be other amino acids including Pro although not Arg or Lys, and Yaa may be Pro. Amino acid amides and methyl esters are also readily hydrolyzed, but rates on arylamides are exceedingly low.. The enzyme catalyses Release of an N-terminal amino acid, preferentially leucine, but not glutamic or aspartic acids.. Its function is as follows. Presumably involved in the processing and regular turnover of intracellular proteins. Catalyzes the removal of unsubstituted N-terminal amino acids from various peptides. This chain is Probable cytosol aminopeptidase, found in Aeromonas salmonicida (strain A449).